The primary structure comprises 319 residues: ATP-dependent 6-phosphofructokinase (319 aa).

Residue G11 coordinates ATP. An ADP-binding site is contributed by 21 to 25 (RAVVR). ATP-binding positions include 72–73 (RC) and 102–105 (GDGS). D103 serves as a coordination point for Mg(2+). Residue 125 to 127 (TID) participates in substrate binding. The Proton acceptor role is filled by D127. R154 is an ADP binding site. Substrate is bound by residues R162 and 169–171 (MGR). ADP contacts are provided by residues 185–187 (GAE), R211, and 213–215 (KKH). Residues E222, R243, and 249–252 (HVQR) each bind substrate.

It belongs to the phosphofructokinase type A (PFKA) family. ATP-dependent PFK group I subfamily. Prokaryotic clade 'B1' sub-subfamily. In terms of assembly, homotetramer. It depends on Mg(2+) as a cofactor.

Its subcellular location is the cytoplasm. It catalyses the reaction beta-D-fructose 6-phosphate + ATP = beta-D-fructose 1,6-bisphosphate + ADP + H(+). It functions in the pathway carbohydrate degradation; glycolysis; D-glyceraldehyde 3-phosphate and glycerone phosphate from D-glucose: step 3/4. Allosterically activated by ADP and other diphosphonucleosides, and allosterically inhibited by phosphoenolpyruvate. Catalyzes the phosphorylation of D-fructose 6-phosphate to fructose 1,6-bisphosphate by ATP, the first committing step of glycolysis. This Anoxybacillus flavithermus (strain DSM 21510 / WK1) protein is ATP-dependent 6-phosphofructokinase.